Here is a 441-residue protein sequence, read N- to C-terminus: Cysteine--tRNA ligase (441 aa).

C24 serves as a coordination point for Zn(2+). The short motif at 26-36 (PTVYNYIHIGN) is the 'HIGH' region element. C204, H230, and E234 together coordinate Zn(2+). The 'KMSKS' region motif lies at 262–266 (KMSKS). K265 provides a ligand contact to ATP.

It belongs to the class-I aminoacyl-tRNA synthetase family. As to quaternary structure, monomer. It depends on Zn(2+) as a cofactor.

It is found in the cytoplasm. It carries out the reaction tRNA(Cys) + L-cysteine + ATP = L-cysteinyl-tRNA(Cys) + AMP + diphosphate. In Mycoplasma capricolum subsp. capricolum (strain California kid / ATCC 27343 / NCTC 10154), this protein is Cysteine--tRNA ligase.